The sequence spans 350 residues: Glycerol-1-phosphate dehydrogenase [NAD(P)+] (350 aa).

NAD(+)-binding positions include 96–100 (GNIID) and 118–121 (TAPS). D123 is a substrate binding site. S127 contributes to the NAD(+) binding site. D170 serves as a coordination point for substrate. The Zn(2+) site is built by D170 and H250. H254 provides a ligand contact to substrate. H266 lines the Zn(2+) pocket.

It belongs to the glycerol-1-phosphate dehydrogenase family. In terms of assembly, homodimer. Zn(2+) serves as cofactor.

It localises to the cytoplasm. The catalysed reaction is sn-glycerol 1-phosphate + NAD(+) = dihydroxyacetone phosphate + NADH + H(+). It carries out the reaction sn-glycerol 1-phosphate + NADP(+) = dihydroxyacetone phosphate + NADPH + H(+). It functions in the pathway membrane lipid metabolism; glycerophospholipid metabolism. In terms of biological role, catalyzes the NAD(P)H-dependent reduction of dihydroxyacetonephosphate (DHAP or glycerone phosphate) to glycerol 1-phosphate (G1P). The G1P thus generated is used as the glycerophosphate backbone of phospholipids in the cellular membranes of Archaea. This is Glycerol-1-phosphate dehydrogenase [NAD(P)+] from Sulfurisphaera tokodaii (strain DSM 16993 / JCM 10545 / NBRC 100140 / 7) (Sulfolobus tokodaii).